The sequence spans 340 residues: MPDPRFFEDLGPATLAELASLSGARLADPATGHQLVSHVAPLESAGPGAVTFLSDPKRLADLAGLSGAVCFLRPEHAADAPPGCALLLTNHPQASWAAAAHRLHASRRHDGAQPVHPDCELEEGVLLAPGVVIGQGARIGRGTQVGPGVVIGPGVAVGRDCRIGANAVIGFALVGDRVSIHAGAVIGEAGFGAAGGPTGVVDLPQLGRVVLQDGVTIGANSCVDRGAFGDTTIGENSKIDNLVHVAHNVRLGRNCVAAAFTGISGSTVVGDGVAFGGKAGVADHLTIGAGANIGAAASVFKSVPAGETWTGFPARPLKRWLRETAWLSRKAGGRGIKGPE.

Histidine 247 acts as the Proton acceptor in catalysis.

It belongs to the transferase hexapeptide repeat family. LpxD subfamily. As to quaternary structure, homotrimer.

The enzyme catalyses a UDP-3-O-[(3R)-3-hydroxyacyl]-alpha-D-glucosamine + a (3R)-hydroxyacyl-[ACP] = a UDP-2-N,3-O-bis[(3R)-3-hydroxyacyl]-alpha-D-glucosamine + holo-[ACP] + H(+). It participates in bacterial outer membrane biogenesis; LPS lipid A biosynthesis. Functionally, catalyzes the N-acylation of UDP-3-O-acylglucosamine using 3-hydroxyacyl-ACP as the acyl donor. Is involved in the biosynthesis of lipid A, a phosphorylated glycolipid that anchors the lipopolysaccharide to the outer membrane of the cell. This is UDP-3-O-acylglucosamine N-acyltransferase from Caulobacter sp. (strain K31).